The primary structure comprises 484 residues: MKFIVKLYPEIMMKSKPVRMRFTKMLETNIRNVLKKVDEDAKVQRQWDRIMVMVPKHKPELAQAFGERLACIPGIAHVVQVDEYSFESVDDIYQQALPVYRDQIAGKTFCVRVKRTGDHDFNSIDVERYVGGGLNQFTDAIGVRLKNPDVTVNLEIDRDKLYMVTKRIEGLGGFPMATQEDVLSLISGGFDSGVSSYQFIKKGARTHYCFFNLGGAQHEIGVKQVAYHLWKTYGESHKVKFVSVPFEPVVAEILEKIDNGQMGVVLKRMMMRTAARIAERLGIQALVTGESLGQVSSQTLTNLNVIDRCTELLILRPLIAMDKQDIINESRRIGTEDFAKSMPEYCGVISQKPTVKAVLAKVEAEEKKFSEDLIDQIVAQAVTIDIREIAEQMDTRITETETVIAIETNEVVIDIRAPEEEEHKPLNIEGVEVKRIPFFKLATQFADLDKQKTYLLYCERGVMSKLQALYLIEQGYTNVKVYRP.

The THUMP domain occupies Gln-63 to Arg-167. ATP contacts are provided by residues Leu-185–Ile-186, Lys-267, Gly-289, and Gln-298. Cys-346 and Cys-458 form a disulfide bridge. One can recognise a Rhodanese domain in the interval Ile-406–Pro-484. Cys-458 (cysteine persulfide intermediate) is an active-site residue.

This sequence belongs to the ThiI family.

Its subcellular location is the cytoplasm. The enzyme catalyses [ThiI sulfur-carrier protein]-S-sulfanyl-L-cysteine + a uridine in tRNA + 2 reduced [2Fe-2S]-[ferredoxin] + ATP + H(+) = [ThiI sulfur-carrier protein]-L-cysteine + a 4-thiouridine in tRNA + 2 oxidized [2Fe-2S]-[ferredoxin] + AMP + diphosphate. It catalyses the reaction [ThiS sulfur-carrier protein]-C-terminal Gly-Gly-AMP + S-sulfanyl-L-cysteinyl-[cysteine desulfurase] + AH2 = [ThiS sulfur-carrier protein]-C-terminal-Gly-aminoethanethioate + L-cysteinyl-[cysteine desulfurase] + A + AMP + 2 H(+). Its pathway is cofactor biosynthesis; thiamine diphosphate biosynthesis. Catalyzes the ATP-dependent transfer of a sulfur to tRNA to produce 4-thiouridine in position 8 of tRNAs, which functions as a near-UV photosensor. Also catalyzes the transfer of sulfur to the sulfur carrier protein ThiS, forming ThiS-thiocarboxylate. This is a step in the synthesis of thiazole, in the thiamine biosynthesis pathway. The sulfur is donated as persulfide by IscS. This Shewanella putrefaciens (strain CN-32 / ATCC BAA-453) protein is tRNA sulfurtransferase.